A 209-amino-acid polypeptide reads, in one-letter code: Uracil phosphoribosyltransferase (209 aa).

Residues Arg-79, Arg-104, and 131 to 139 (DPMLATGVS) each bind 5-phospho-alpha-D-ribose 1-diphosphate. Uracil is bound by residues Ile-194 and 199–201 (GDA). Asp-200 provides a ligand contact to 5-phospho-alpha-D-ribose 1-diphosphate.

The protein belongs to the UPRTase family. It depends on Mg(2+) as a cofactor.

It catalyses the reaction UMP + diphosphate = 5-phospho-alpha-D-ribose 1-diphosphate + uracil. Its pathway is pyrimidine metabolism; UMP biosynthesis via salvage pathway; UMP from uracil: step 1/1. Its activity is regulated as follows. Allosterically activated by GTP. Its function is as follows. Catalyzes the conversion of uracil and 5-phospho-alpha-D-ribose 1-diphosphate (PRPP) to UMP and diphosphate. This chain is Uracil phosphoribosyltransferase, found in Thermotoga petrophila (strain ATCC BAA-488 / DSM 13995 / JCM 10881 / RKU-1).